The primary structure comprises 178 residues: Mediator of RNA polymerase II transcription subunit 31 (178 aa).

Over residues 129–140 the composition is skewed to acidic residues; sequence EGQELEESEDEA. The segment at 129 to 178 is disordered; sequence EGQELEESEDEADIRQKDTEDEDDEETMKKPDADTAEKNSTTSTVSKKEK. A compositionally biased stretch (basic and acidic residues) spans 155 to 165; that stretch reads TMKKPDADTAE. The segment covering 166–178 has biased composition (polar residues); it reads KNSTTSTVSKKEK.

Belongs to the Mediator complex subunit 31 family. Component of the Mediator complex.

It is found in the nucleus. Functionally, component of the Mediator complex, a coactivator involved in the regulated transcription of nearly all RNA polymerase II-dependent genes. Mediator functions as a bridge to convey information from gene-specific regulatory proteins to the basal RNA polymerase II transcription machinery. Mediator is recruited to promoters by direct interactions with regulatory proteins and serves as a scaffold for the assembly of a functional preinitiation complex with RNA polymerase II and the general transcription factors. This Caenorhabditis elegans protein is Mediator of RNA polymerase II transcription subunit 31.